A 510-amino-acid polypeptide reads, in one-letter code: Histidine ammonia-lyase (510 aa).

Residues 143-145 (ASG) constitute a cross-link (5-imidazolinone (Ala-Gly)). 2,3-didehydroalanine (Ser) is present on Ser-144.

The protein belongs to the PAL/histidase family. In terms of processing, contains an active site 4-methylidene-imidazol-5-one (MIO), which is formed autocatalytically by cyclization and dehydration of residues Ala-Ser-Gly.

It localises to the cytoplasm. The catalysed reaction is L-histidine = trans-urocanate + NH4(+). Its pathway is amino-acid degradation; L-histidine degradation into L-glutamate; N-formimidoyl-L-glutamate from L-histidine: step 1/3. This chain is Histidine ammonia-lyase, found in Shewanella woodyi (strain ATCC 51908 / MS32).